We begin with the raw amino-acid sequence, 262 residues long: MAQPAELSREENVYMAKLAEQAERYEEMVEFMEKVAKTVDSEELTVEERNLLSVAYKNVIGARRASWRIISSIEQKEESRGNEDRVTLIKDYRGKIEVELTKICDGILKLLDSHLVPSSTAPESKVFYLKMKGDYYRYLAEFKSGTERKDAAENTMVAYKAAQEIALAELPPTHPIRLGLALNFSVFYYEILNSPDRACDLAKQAFDEAISELDSLSEESYKDSTLIMQLLRDNLTLWTSDISEDAAEEMKDAPKGESGDGQ.

This sequence belongs to the 14-3-3 family.

The chain is 14-3-3-like protein B from Hordeum vulgare (Barley).